Reading from the N-terminus, the 100-residue chain is Osteocalcin (100 aa).

The signal sequence occupies residues Met-1–Ala-23. The propeptide occupies Lys-24–Arg-51. The Gla domain occupies Tyr-52–Gly-98. The residue at position 60 (Pro-60) is a 4-hydroxyproline. Ca(2+)-binding residues include Glu-68, Glu-72, Glu-75, and Asp-81. A 4-carboxyglutamate mark is found at Glu-68, Glu-72, and Glu-75. Cys-74 and Cys-80 are oxidised to a cystine.

It belongs to the osteocalcin/matrix Gla protein family. Gamma-carboxyglutamate residues are formed by vitamin K dependent carboxylation by GGCX. These residues are essential for the binding of calcium. Decarboxylation promotes the hormone activity.

Its subcellular location is the secreted. The carboxylated form is one of the main organic components of the bone matrix, which constitutes 1-2% of the total bone protein: it acts as a negative regulator of bone formation and is required to limit bone formation without impairing bone resorption or mineralization. The carboxylated form binds strongly to apatite and calcium. Functionally, the uncarboxylated form acts as a hormone secreted by osteoblasts, which regulates different cellular processes, such as energy metabolism, male fertility and brain development. Regulates of energy metabolism by acting as a hormone favoring pancreatic beta-cell proliferation, insulin secretion and sensitivity and energy expenditure. Uncarboxylated osteocalcin hormone also promotes testosterone production in the testes: acts as a ligand for G protein-coupled receptor GPRC6A at the surface of Leydig cells, initiating a signaling response that promotes the expression of enzymes required for testosterone synthesis in a CREB-dependent manner. Also acts as a regulator of brain development: osteocalcin hormone crosses the blood-brain barrier and acts as a ligand for GPR158 on neurons, initiating a signaling response that prevents neuronal apoptosis in the hippocampus, favors the synthesis of all monoamine neurotransmitters and inhibits that of gamma-aminobutyric acid (GABA). Osteocalcin also crosses the placenta during pregnancy and maternal osteocalcin is required for fetal brain development. The protein is Osteocalcin (BGLAP) of Macaca mulatta (Rhesus macaque).